The primary structure comprises 226 residues: MLIQIAEVFSAAEAAQIRQRLEQADWVDGRVTAGHQSAQVKHNRQLPEQHPLAQELGELILQRLSANNLFMSAALPRKIFPPLFNRYEGGESFGYHVDNAVRVVPGTSERVRTDLSATLFFSDPDTYDGGELVVDDTYGPRSVKLPAGHLVLYPGTSLHKVNPVTRGARISAFFWMQSLVREDSQRNLLLDMDVAIQRLNQDAAGHPSIVQLTGIYHNLLRRWADV.

In terms of domain architecture, Fe2OG dioxygenase spans 78-178; sequence KIFPPLFNRY…RISAFFWMQS (101 aa). H96, D98, and H159 together coordinate Fe cation. R169 is a 2-oxoglutarate binding site.

Requires Fe(2+) as cofactor. L-ascorbate serves as cofactor.

The sequence is that of PKHD-type hydroxylase Bpet2704 from Bordetella petrii (strain ATCC BAA-461 / DSM 12804 / CCUG 43448).